The chain runs to 493 residues: Aminotransferase swnA (493 aa).

Belongs to the class-I pyridoxal-phosphate-dependent aminotransferase family. Pyridoxal 5'-phosphate is required as a cofactor.

It functions in the pathway mycotoxin biosynthesis. Its function is as follows. Aminotransferase; part of the gene cluster that mediates the biosynthesis of swainsonine (SW), a cytotoxic fungal alkaloid and a potential cancer therapy drug. Swainsonine production occurs via a multibranched pathway and is dispensable for fungal colonization of plants and infection of insect hosts. The first step of swainsonine biosynthesis is the production of the precursor pipecolic acid (PA) via conversion of L-lysine (Lys) to 1-piperideine-6-carboxylate (P6C) by the aminotransferase swnA, the latter being further reduced to PA by the reductase swnR. The PKS-NRPS hybrid synthetase swnK uptakes and condensates PA and malonyl-CoA with and without skipping of the ketoreductase (KR) domain in order to produce 3 intermediates, 1-oxoindolizidine, (1S)-1-hydroxyindolizin, and (1R)-1-hydroxyindolizine; with the transisomer (1S)-1-hydroxyindolizin being predominant. The terminal thioester reductase (TE) domain of swnK is involved in reduction of the thioester bond to release the intermediate aldehydes. The oxidoreductase swnN could contribute to the reduction of 1-oxoindolizidine to (1S)-1-hydroxyindolizin and (1R)-1-hydroxyindolizine, contributing to the major route of SW production. The dioxygenase swnH2 would be responsible for the oxidization of (1R)-1-hydroxyindolizine into (1R,2S)-1,2-dihydroxyindolizine and of (1S)-1-hydroxyindolizin to yield both (1R,2S)-1,2-dihydroxyindolizine and (1S,2S)-1,2-dihydroxyindolizine. The dioxygenase swnH1 then performs the conversion of the 1,2-dihydroxyindolizine epimers to SW. In Arthroderma benhamiae (strain ATCC MYA-4681 / CBS 112371) (Trichophyton mentagrophytes), this protein is Aminotransferase swnA.